The chain runs to 503 residues: Medium/long-chain-fatty-acid--CoA ligase FadD17 (503 aa).

It belongs to the ATP-dependent AMP-binding enzyme family.

The catalysed reaction is a medium-chain fatty acid + ATP + CoA = a medium-chain fatty acyl-CoA + AMP + diphosphate. It catalyses the reaction a long-chain fatty acid + ATP + CoA = a long-chain fatty acyl-CoA + AMP + diphosphate. It functions in the pathway lipid metabolism; fatty acid biosynthesis. Functionally, catalyzes the activation of medium/long-chain fatty acids as acyl-coenzyme A (acyl-CoA), which are then transferred to the multifunctional polyketide synthase (PKS) type III for further chain extension. The chain is Medium/long-chain-fatty-acid--CoA ligase FadD17 (fadD17) from Mycobacterium marinum (strain ATCC BAA-535 / M).